Reading from the N-terminus, the 348-residue chain is NADH-quinone oxidoreductase subunit H 1 (348 aa).

A run of 8 helical transmembrane segments spans residues I11 to V31, F83 to I103, V136 to G156, S172 to L192, G208 to A228, M268 to F288, L289 to I309, and L324 to V344.

It belongs to the complex I subunit 1 family. NDH-1 is composed of 14 different subunits. Subunits NuoA, H, J, K, L, M, N constitute the membrane sector of the complex.

Its subcellular location is the cell inner membrane. It catalyses the reaction a quinone + NADH + 5 H(+)(in) = a quinol + NAD(+) + 4 H(+)(out). Its function is as follows. NDH-1 shuttles electrons from NADH, via FMN and iron-sulfur (Fe-S) centers, to quinones in the respiratory chain. The immediate electron acceptor for the enzyme in this species is believed to be ubiquinone. Couples the redox reaction to proton translocation (for every two electrons transferred, four hydrogen ions are translocated across the cytoplasmic membrane), and thus conserves the redox energy in a proton gradient. This subunit may bind ubiquinone. The sequence is that of NADH-quinone oxidoreductase subunit H 1 from Geobacter sulfurreducens (strain ATCC 51573 / DSM 12127 / PCA).